We begin with the raw amino-acid sequence, 291 residues long: Nucleotide-binding protein LGAS_1315 (291 aa).

ATP is bound at residue Gly13–Thr20. Asp63 to Val66 is a GTP binding site.

The protein belongs to the RapZ-like family.

Displays ATPase and GTPase activities. This is Nucleotide-binding protein LGAS_1315 from Lactobacillus gasseri (strain ATCC 33323 / DSM 20243 / BCRC 14619 / CIP 102991 / JCM 1131 / KCTC 3163 / NCIMB 11718 / NCTC 13722 / AM63).